We begin with the raw amino-acid sequence, 556 residues long: Putative D-arabinono-1,4-lactone oxidase (556 aa).

Positions 47-217 (FTSLPELYIQ…TEVTFKAVPA (171 aa)) constitute an FAD-binding PCMH-type domain. Residue His-84 is modified to Pros-8alpha-FAD histidine.

The protein belongs to the oxygen-dependent FAD-linked oxidoreductase family. The cofactor is FAD.

The protein resides in the mitochondrion membrane. It catalyses the reaction D-arabinono-1,4-lactone + O2 = dehydro-D-arabinono-1,4-lactone + H2O2 + H(+). It participates in cofactor biosynthesis; D-erythroascorbate biosynthesis; dehydro-D-arabinono-1,4-lactone from D-arabinose: step 2/2. The protein is Putative D-arabinono-1,4-lactone oxidase (alo-1) of Neurospora crassa (strain ATCC 24698 / 74-OR23-1A / CBS 708.71 / DSM 1257 / FGSC 987).